We begin with the raw amino-acid sequence, 250 residues long: Pyrroloquinoline-quinone synthase (250 aa).

This sequence belongs to the PqqC family.

It catalyses the reaction 6-(2-amino-2-carboxyethyl)-7,8-dioxo-1,2,3,4,7,8-hexahydroquinoline-2,4-dicarboxylate + 3 O2 = pyrroloquinoline quinone + 2 H2O2 + 2 H2O + H(+). The protein operates within cofactor biosynthesis; pyrroloquinoline quinone biosynthesis. Functionally, ring cyclization and eight-electron oxidation of 3a-(2-amino-2-carboxyethyl)-4,5-dioxo-4,5,6,7,8,9-hexahydroquinoline-7,9-dicarboxylic-acid to PQQ. The polypeptide is Pyrroloquinoline-quinone synthase (Xanthomonas euvesicatoria pv. vesicatoria (strain 85-10) (Xanthomonas campestris pv. vesicatoria)).